The sequence spans 431 residues: Tyrosine--tRNA ligase (431 aa).

Tyr-34 is a binding site for L-tyrosine. The 'HIGH' region signature appears at 39 to 48; sequence PTADSLHIGH. Positions 171 and 175 each coordinate L-tyrosine. The 'KMSKS' region signature appears at 231–235; sequence KFGKT. Lys-234 is a binding site for ATP. Positions 353-422 constitute an S4 RNA-binding domain; sequence INVVEALVKT…GKYTILRRGK (70 aa).

It belongs to the class-I aminoacyl-tRNA synthetase family. TyrS type 1 subfamily. Homodimer.

The protein localises to the cytoplasm. The catalysed reaction is tRNA(Tyr) + L-tyrosine + ATP = L-tyrosyl-tRNA(Tyr) + AMP + diphosphate + H(+). Catalyzes the attachment of tyrosine to tRNA(Tyr) in a two-step reaction: tyrosine is first activated by ATP to form Tyr-AMP and then transferred to the acceptor end of tRNA(Tyr). The chain is Tyrosine--tRNA ligase from Neisseria meningitidis serogroup C (strain 053442).